We begin with the raw amino-acid sequence, 597 residues long: Period protein homolog lin-42 (597 aa).

The interval 1–44 (MEPAGHSSATHNIVVPNANPTQPQPLAPAMREEGATLSPPNTWS) is disordered. In terms of domain architecture, PAS spans 155–223 (LQASHVSSNF…VRQAHIDLHN (69 aa)). Disordered stretches follow at residues 313-335 (PVPS…QNQG), 418-450 (KSQS…EALT), 473-509 (DDVP…PPPG), and 555-597 (DGLL…DSQN). The segment covering 425–438 (SPAKQDEPFDEKKY) has biased composition (basic and acidic residues). Residues 487 to 497 (IHWTSSSQNHY) are compositionally biased toward polar residues. Residues 561 to 577 (GATSTGGASPTSGTNSP) show a composition bias toward low complexity.

The protein localises to the nucleus. The protein resides in the cytoplasm. In terms of biological role, transcriptional repressor which interacts with the promoter region of target genes. Has a specific role in developmental timing where it regulates temporal expression of a number of miRNAs and mRNAs. Controls temporal cell fate transition during embryonic and early larval development by restricting the expression of specific miRNAs, including let-7, miR-48, lin-4, miR-35 and miR-58. Restricts the accumulation of lin-29 in the hypodermis to the larval L4 stage, thus controlling terminal differentiation of seam cells. Has a role in the miRNA-mediated specification of asymmetric gene expression patterns in gustatory neurons. May also regulate genes involved in other biological processes including transport, small molecule metabolism, and growth. Inhibits dauer formation, by antagonizing daf-12. Specifically required for maintaining the timing of larval development and molting cycle rhythms. The polypeptide is Period protein homolog lin-42 (Caenorhabditis elegans).